Here is a 379-residue protein sequence, read N- to C-terminus: Succinyl-diaminopimelate desuccinylase (379 aa).

Residue histidine 68 coordinates Zn(2+). Residue aspartate 70 is part of the active site. Aspartate 101 provides a ligand contact to Zn(2+). Glutamate 135 functions as the Proton acceptor in the catalytic mechanism. Zn(2+)-binding residues include glutamate 136, glutamate 164, and histidine 350.

It belongs to the peptidase M20A family. DapE subfamily. As to quaternary structure, homodimer. The cofactor is Zn(2+). Requires Co(2+) as cofactor.

It carries out the reaction N-succinyl-(2S,6S)-2,6-diaminopimelate + H2O = (2S,6S)-2,6-diaminopimelate + succinate. It participates in amino-acid biosynthesis; L-lysine biosynthesis via DAP pathway; LL-2,6-diaminopimelate from (S)-tetrahydrodipicolinate (succinylase route): step 3/3. Catalyzes the hydrolysis of N-succinyl-L,L-diaminopimelic acid (SDAP), forming succinate and LL-2,6-diaminopimelate (DAP), an intermediate involved in the bacterial biosynthesis of lysine and meso-diaminopimelic acid, an essential component of bacterial cell walls. The sequence is that of Succinyl-diaminopimelate desuccinylase from Bordetella parapertussis (strain 12822 / ATCC BAA-587 / NCTC 13253).